We begin with the raw amino-acid sequence, 235 residues long: Phosphoribosylaminoimidazole-succinocarboxamide synthase (235 aa).

It belongs to the SAICAR synthetase family.

The enzyme catalyses 5-amino-1-(5-phospho-D-ribosyl)imidazole-4-carboxylate + L-aspartate + ATP = (2S)-2-[5-amino-1-(5-phospho-beta-D-ribosyl)imidazole-4-carboxamido]succinate + ADP + phosphate + 2 H(+). The protein operates within purine metabolism; IMP biosynthesis via de novo pathway; 5-amino-1-(5-phospho-D-ribosyl)imidazole-4-carboxamide from 5-amino-1-(5-phospho-D-ribosyl)imidazole-4-carboxylate: step 1/2. This is Phosphoribosylaminoimidazole-succinocarboxamide synthase from Streptococcus pneumoniae serotype 2 (strain D39 / NCTC 7466).